The following is a 608-amino-acid chain: Formate hydrogenlyase subunit 3 (608 aa).

A run of 12 helical transmembrane segments spans residues 10–26 (GVAW…LFSF), 44–67 (LYTA…LSLV), 76–93 (LNAI…FVSL), 116–140 (AAAV…MALC), 153–173 (LWFA…WLLW), 197–218 (IWLL…HGWV), 229–251 (AAAL…LSLL), 258–280 (WWGI…YALV), 296–312 (IGII…GIAL), 416–440 (LAVG…VTFL), 453–476 (CAPL…GVAA), and 502–521 (MITL…MAIC).

Belongs to the complex I subunit 4 family. In terms of assembly, FHL comprises of a formate dehydrogenase, unidentified electron carriers and a hydrogenase (isoenzyme 3). In this non-energy conserving pathway molecular hydrogen and carbodioxide from formate are released.

Its subcellular location is the cell inner membrane. The polypeptide is Formate hydrogenlyase subunit 3 (hycC) (Escherichia coli (strain K12)).